Consider the following 170-residue polypeptide: ATP synthase subunit b (170 aa).

The chain crosses the membrane as a helical span at residues 5–25 (YFIPCLLLPTMMLASGGGGET).

This sequence belongs to the ATPase B chain family. As to quaternary structure, F-type ATPases have 2 components, F(1) - the catalytic core - and F(0) - the membrane proton channel. F(1) has five subunits: alpha(3), beta(3), gamma(1), delta(1), epsilon(1). F(0) has three main subunits: a(1), b(2) and c(10-14). The alpha and beta chains form an alternating ring which encloses part of the gamma chain. F(1) is attached to F(0) by a central stalk formed by the gamma and epsilon chains, while a peripheral stalk is formed by the delta and b chains.

It is found in the cell inner membrane. Its function is as follows. F(1)F(0) ATP synthase produces ATP from ADP in the presence of a proton or sodium gradient. F-type ATPases consist of two structural domains, F(1) containing the extramembraneous catalytic core and F(0) containing the membrane proton channel, linked together by a central stalk and a peripheral stalk. During catalysis, ATP synthesis in the catalytic domain of F(1) is coupled via a rotary mechanism of the central stalk subunits to proton translocation. In terms of biological role, component of the F(0) channel, it forms part of the peripheral stalk, linking F(1) to F(0). This chain is ATP synthase subunit b, found in Wolinella succinogenes (strain ATCC 29543 / DSM 1740 / CCUG 13145 / JCM 31913 / LMG 7466 / NCTC 11488 / FDC 602W) (Vibrio succinogenes).